Reading from the N-terminus, the 112-residue chain is Ribosomal processing cysteine protease Prp (112 aa).

His22 acts as the Proton donor in catalysis. The Nucleophile role is filled by Cys34.

It belongs to the Prp family. Homodimer.

In terms of biological role, an essential cysteine protease that cleaves the N-terminus from ribosomal protein bL27. This is Ribosomal processing cysteine protease Prp from Bacillus subtilis (strain 168).